A 540-amino-acid chain; its full sequence is Serine/threonine-protein phosphatase ppzA (540 aa).

Disordered stretches follow at residues 1–108 (MGQS…KRGH) and 120–140 (VDHV…STQK). 2 stretches are compositionally biased toward polar residues: residues 15–24 (SLQSYPSFSR) and 45–54 (SDSPRGSTAG). The segment covering 62–88 (AASVKSTTSRRSSTNQSVQSPDDTPSQ) has biased composition (low complexity). Residues 89–98 (PDAPEPPPSP) show a composition bias toward pro residues. Low complexity predominate over residues 127–136 (PPTGAAPTGP). Residues Asp-239, His-241, Asp-267, and Asn-299 each contribute to the Mn(2+) site. The Phosphatase tensin-type domain maps to 258-540 (PASNYLFLGD…SLVTSWGISR (283 aa)). The active-site Proton donor is His-300. Mn(2+)-binding residues include His-348 and His-423.

Belongs to the PPP phosphatase family. PP-Z subfamily. Interacts with at least 54 proteins, of which 31 are detected only after iron starvation and 22 are detected only in control conditions. Only the regulatory subunit of the protein phosphatase PP1 (Afu1g04800/AFUB_005140) interacts with ppzA in both conditions. Mn(2+) is required as a cofactor.

Its subcellular location is the cytoplasm. It catalyses the reaction O-phospho-L-seryl-[protein] + H2O = L-seryl-[protein] + phosphate. The enzyme catalyses O-phospho-L-threonyl-[protein] + H2O = L-threonyl-[protein] + phosphate. Functionally, catalytic subunit of protein phosphatase Z (PPZ) involved in iron assimilation. Regulates secondary metabolites production, including gliotoxin, pyripyropene A, fumagillin, fumiquinazoline A, triacetyl-fusarinine C, and helvolic acid. Plays a key role in pathogenicity. The protein is Serine/threonine-protein phosphatase ppzA of Aspergillus fumigatus (strain CBS 144.89 / FGSC A1163 / CEA10) (Neosartorya fumigata).